A 446-amino-acid chain; its full sequence is NADH-ubiquinone oxidoreductase chain 4 (446 aa).

13 helical membrane-spanning segments follow: residues 4-24, 56-76, 93-113, 114-134, 139-159, 182-202, 218-238, 245-265, 272-292, 297-317, 330-350, 373-393, and 426-446; these read IIFF…YWMV, MLSY…LLAS, IIIL…FMFY, LFFE…GYQP, AGLY…IGIF, LLYF…LVHL, ILAG…ISFL, YSFV…LVCL, ALIA…LLTM, LCGS…LFCL, MLIN…WFLL, IVSW…FSAA, and LLHW…MLWL.

The protein belongs to the complex I subunit 4 family.

The protein resides in the mitochondrion membrane. It catalyses the reaction a ubiquinone + NADH + 5 H(+)(in) = a ubiquinol + NAD(+) + 4 H(+)(out). Core subunit of the mitochondrial membrane respiratory chain NADH dehydrogenase (Complex I) that is believed to belong to the minimal assembly required for catalysis. Complex I functions in the transfer of electrons from NADH to the respiratory chain. The immediate electron acceptor for the enzyme is believed to be ubiquinone. This Drosophila melanogaster (Fruit fly) protein is NADH-ubiquinone oxidoreductase chain 4 (mt:ND4).